The sequence spans 137 residues: Large ribosomal subunit protein uL16c (137 aa).

Belongs to the universal ribosomal protein uL16 family. As to quaternary structure, part of the 50S ribosomal subunit.

It is found in the plastid. The protein is Large ribosomal subunit protein uL16c of Cuscuta exaltata (Tall dodder).